Consider the following 75-residue polypeptide: UPF0352 protein ETA_12580 (75 aa).

It belongs to the UPF0352 family.

The polypeptide is UPF0352 protein ETA_12580 (Erwinia tasmaniensis (strain DSM 17950 / CFBP 7177 / CIP 109463 / NCPPB 4357 / Et1/99)).